Here is a 396-residue protein sequence, read N- to C-terminus: Flap endonuclease 1 (396 aa).

Positions 1–104 (MGIKHLYQLI…GELAKRFQRK (104 aa)) are N-domain. Asp-34 lines the Mg(2+) pocket. The DNA site is built by Arg-47 and Arg-70. Positions 86, 158, 160, 179, and 181 each coordinate Mg(2+). Residues 122 to 255 (DVEKFSRRTV…STALKLIRDH (134 aa)) form an I-domain region. Glu-158 provides a ligand contact to DNA. DNA contacts are provided by Gly-233 and Asp-235. Residue Asp-235 participates in Mg(2+) binding. The segment at 338–396 (MKSAQQSRLEGFFKPVERTPEEKASLKRKADEKLSEKKKKQKEEAKAKKQAKSKPRTAG) is disordered. An interaction with PCNA region spans residues 342-350 (QQSRLEGFF). Residues 352 to 384 (PVERTPEEKASLKRKADEKLSEKKKKQKEEAKA) are compositionally biased toward basic and acidic residues. Positions 385–396 (KKQAKSKPRTAG) are enriched in basic residues.

This sequence belongs to the XPG/RAD2 endonuclease family. FEN1 subfamily. As to quaternary structure, interacts with PCNA. Three molecules of FEN1 bind to one PCNA trimer with each molecule binding to one PCNA monomer. PCNA stimulates the nuclease activity without altering cleavage specificity. Mg(2+) serves as cofactor. In terms of processing, phosphorylated. Phosphorylation upon DNA damage induces relocalization to the nuclear plasma.

It is found in the nucleus. Its subcellular location is the nucleolus. The protein localises to the nucleoplasm. It localises to the mitochondrion. Functionally, structure-specific nuclease with 5'-flap endonuclease and 5'-3' exonuclease activities involved in DNA replication and repair. During DNA replication, cleaves the 5'-overhanging flap structure that is generated by displacement synthesis when DNA polymerase encounters the 5'-end of a downstream Okazaki fragment. It enters the flap from the 5'-end and then tracks to cleave the flap base, leaving a nick for ligation. Also involved in the long patch base excision repair (LP-BER) pathway, by cleaving within the apurinic/apyrimidinic (AP) site-terminated flap. Acts as a genome stabilization factor that prevents flaps from equilibrating into structures that lead to duplications and deletions. Also possesses 5'-3' exonuclease activity on nicked or gapped double-stranded DNA, and exhibits RNase H activity. Also involved in replication and repair of rDNA and in repairing mitochondrial DNA. This is Flap endonuclease 1 from Phaeosphaeria nodorum (strain SN15 / ATCC MYA-4574 / FGSC 10173) (Glume blotch fungus).